The primary structure comprises 354 residues: Rhodopsin (354 aa).

At 1–36 (MNGTEGPYFYVPMVNTTGIVRSPYEYPQYYLVSPAA) the chain is on the extracellular side. N-linked (GlcNAc...) asparagine glycans are attached at residues N2 and N15. Residues 37-61 (YACLGAYMFFLILVGFPINFLTLYV) form a helical membrane-spanning segment. Topologically, residues 62 to 73 (TIEHKKLRTPLN) are cytoplasmic. A helical transmembrane segment spans residues 74 to 96 (YILLNLAVADLFMVFGGFTTTIY). Over 97 to 110 (TSMHGYFVLGRLGC) the chain is Extracellular. C110 and C187 are oxidised to a cystine. Residues 111–133 (NLEGYFATLGGEIGLWSLVVLAV) traverse the membrane as a helical segment. Residues 134–136 (ERW) carry the 'Ionic lock' involved in activated form stabilization motif. Over 134–152 (ERWLVVCKPISNFRFSENH) the chain is Cytoplasmic. A helical membrane pass occupies residues 153 to 173 (AIMGLVFTWIMANSCAAPPLL). Residues 174–202 (GWSRYIPEGMQCSCGVDYYTRAEGFNNES) are Extracellular-facing. The chain crosses the membrane as a helical span at residues 203–224 (FVIYMFICHFCIPLIVVFFCYG). The Cytoplasmic segment spans residues 225–252 (RLLCAVKEAAAAQQESETTQRAEREVTR). The helical transmembrane segment at 253-274 (MVVIMVIGFLVCWIPYASVAWY) threads the bilayer. The Extracellular portion of the chain corresponds to 275–286 (IFTHQGSEFGPL). The helical transmembrane segment at 287 to 308 (FMTVPAFFAKSASIYNPLIYIC) threads the bilayer. K296 carries the post-translational modification N6-(retinylidene)lysine. The Cytoplasmic portion of the chain corresponds to 309–354 (MNKQFRHCMITTLCCGKNPFEEEEGASTTASKTEASSVSSSSVSPA). Residues C322 and C323 are each lipidated (S-palmitoyl cysteine). Positions 333–354 (GASTTASKTEASSVSSSSVSPA) are disordered. A compositionally biased stretch (low complexity) spans 334–354 (ASTTASKTEASSVSSSSVSPA).

The protein belongs to the G-protein coupled receptor 1 family. Opsin subfamily. In terms of processing, phosphorylated on some or all of the serine and threonine residues present in the C-terminal region. Post-translationally, contains one covalently linked retinal chromophore.

It localises to the membrane. Its subcellular location is the cell projection. It is found in the cilium. The protein resides in the photoreceptor outer segment. Photoreceptor required for image-forming vision at low light intensity. While most salt water fish species use retinal as chromophore, most freshwater fish use 3-dehydroretinal, or a mixture of retinal and 3-dehydroretinal. Light-induced isomerization of 11-cis to all-trans retinal triggers a conformational change that activates signaling via G-proteins. Subsequent receptor phosphorylation mediates displacement of the bound G-protein alpha subunit by arrestin and terminates signaling. This Poecilia reticulata (Guppy) protein is Rhodopsin (rho).